A 32-amino-acid chain; its full sequence is Photosystem II reaction center protein T (32 aa).

A helical membrane pass occupies residues 3–23 (ALVYTFLLVATLGIIFFAIFF).

Belongs to the PsbT family. PSII is composed of 1 copy each of membrane proteins PsbA, PsbB, PsbC, PsbD, PsbE, PsbF, PsbH, PsbI, PsbJ, PsbK, PsbL, PsbM, PsbT, PsbY, PsbZ, Psb30/Ycf12, at least 3 peripheral proteins of the oxygen-evolving complex and a large number of cofactors. It forms dimeric complexes.

The protein resides in the plastid. The protein localises to the chloroplast thylakoid membrane. Functionally, found at the monomer-monomer interface of the photosystem II (PS II) dimer, plays a role in assembly and dimerization of PSII. PSII is a light-driven water plastoquinone oxidoreductase, using light energy to abstract electrons from H(2)O, generating a proton gradient subsequently used for ATP formation. In Psilotum nudum (Whisk fern), this protein is Photosystem II reaction center protein T.